The sequence spans 289 residues: (3R)-3-[(carboxymethyl)amino]fatty acid oxygenase/decarboxylase (289 aa).

Residues Tyr-65, Tyr-70, and Gly-93 each contribute to the a (3R)-3-[(carboxymethyl)amino]fatty acid site. Fe(2+) contacts are provided by His-97 and Asp-99. The a (3R)-3-[(carboxymethyl)amino]fatty acid site is built by Tyr-100 and Lys-158. Fe(2+) is bound at residue His-260. Position 264 (His-264) interacts with 2-oxoglutarate. Arg-275 lines the a (3R)-3-[(carboxymethyl)amino]fatty acid pocket.

It belongs to the TfdA dioxygenase family. Fe(2+) is required as a cofactor.

The enzyme catalyses a (3R)-3-[(carboxymethyl)amino]fatty acid + 2 2-oxoglutarate + 2 O2 = a (3R)-3-isocyanyl-fatty acid + 2 succinate + 3 CO2 + 2 H2O. The catalysed reaction is a (3R)-3-[(carboxymethyl)amino]fatty acid + 2-oxoglutarate + O2 = a (3R)-3-{[carboxy(hydroxy)methyl]amino}fatty acid + succinate + CO2. It carries out the reaction a (3R)-3-{[carboxy(hydroxy)methyl]amino}fatty acid + 2-oxoglutarate + O2 = a (3R)-3-isocyanyl-fatty acid + succinate + 2 CO2 + 2 H2O. Involved in the biosynthesis of a unique class of isonitrile lipopeptides (INLPs) that seem to play a role in metal acquisition in M.marinum. Catalyzes the conversion of (3R)-3-[(carboxymethyl)amino]fatty acids to (3R)-3-isocyanyl-fatty acids through an oxidative decarboxylation mechanism, thereby generating the isonitrile group of INLPs. The polypeptide is (3R)-3-[(carboxymethyl)amino]fatty acid oxygenase/decarboxylase (Mycobacterium marinum (strain ATCC BAA-535 / M)).